A 108-amino-acid chain; its full sequence is Protein YcgL (108 aa).

The 85-residue stretch at 12–96 folds into the YcgL domain; sequence MFCVIYRSSK…PPEDLLKQHL (85 aa).

The sequence is that of Protein YcgL from Escherichia coli O9:H4 (strain HS).